The sequence spans 130 residues: Small ribosomal subunit protein uS9 (130 aa).

This sequence belongs to the universal ribosomal protein uS9 family.

In Nitrosospira multiformis (strain ATCC 25196 / NCIMB 11849 / C 71), this protein is Small ribosomal subunit protein uS9.